The following is a 155-amino-acid chain: 2-C-methyl-D-erythritol 2,4-cyclodiphosphate synthase (155 aa).

Residues aspartate 8 and histidine 10 each contribute to the a divalent metal cation site. 4-CDP-2-C-methyl-D-erythritol 2-phosphate contacts are provided by residues 8–10 (DVH) and 34–35 (HS). Position 42 (histidine 42) interacts with a divalent metal cation. 4-CDP-2-C-methyl-D-erythritol 2-phosphate contacts are provided by residues 56–58 (DIG), 61–65 (FPDTD), 100–106 (AQAPKMA), 132–135 (TTTE), phenylalanine 139, and arginine 142.

This sequence belongs to the IspF family. As to quaternary structure, homotrimer. A divalent metal cation is required as a cofactor.

It catalyses the reaction 4-CDP-2-C-methyl-D-erythritol 2-phosphate = 2-C-methyl-D-erythritol 2,4-cyclic diphosphate + CMP. It functions in the pathway isoprenoid biosynthesis; isopentenyl diphosphate biosynthesis via DXP pathway; isopentenyl diphosphate from 1-deoxy-D-xylulose 5-phosphate: step 4/6. Functionally, involved in the biosynthesis of isopentenyl diphosphate (IPP) and dimethylallyl diphosphate (DMAPP), two major building blocks of isoprenoid compounds. Catalyzes the conversion of 4-diphosphocytidyl-2-C-methyl-D-erythritol 2-phosphate (CDP-ME2P) to 2-C-methyl-D-erythritol 2,4-cyclodiphosphate (ME-CPP) with a corresponding release of cytidine 5-monophosphate (CMP). This chain is 2-C-methyl-D-erythritol 2,4-cyclodiphosphate synthase, found in Saccharophagus degradans (strain 2-40 / ATCC 43961 / DSM 17024).